We begin with the raw amino-acid sequence, 112 residues long: Large ribosomal subunit protein uL22 (112 aa).

It belongs to the universal ribosomal protein uL22 family. As to quaternary structure, part of the 50S ribosomal subunit.

Functionally, this protein binds specifically to 23S rRNA; its binding is stimulated by other ribosomal proteins, e.g. L4, L17, and L20. It is important during the early stages of 50S assembly. It makes multiple contacts with different domains of the 23S rRNA in the assembled 50S subunit and ribosome. Its function is as follows. The globular domain of the protein is located near the polypeptide exit tunnel on the outside of the subunit, while an extended beta-hairpin is found that lines the wall of the exit tunnel in the center of the 70S ribosome. This is Large ribosomal subunit protein uL22 from Lawsonia intracellularis (strain PHE/MN1-00).